The following is a 479-amino-acid chain: Auxin transporter-like protein 1 (479 aa).

Residues 1-58 (MLSEKQGEETMMSSLNETIELNEEREEEKGASPGSGFKNFLWHGGSVYDAWFSCASNQ) are Cytoplasmic-facing. The helical transmembrane segment at 59-76 (VAQVLLTLPYSFSQLGMI) threads the bilayer. At 77–78 (SG) the chain is on the extracellular side. Residues 79 to 99 (IIFQVFYGLMGSWTAYLISIL) traverse the membrane as a helical segment. Topologically, residues 100–134 (YVEYRSRKEKENVSFKNHVIQWFEVLEGLLGPYWK) are cytoplasmic. Residues 135–155 (AIGLAFNCTFLLFGSVIQLIA) traverse the membrane as a helical segment. Over 156 to 171 (CASNIYYINDHLDKRT) the chain is Extracellular. The helical transmembrane segment at 172 to 192 (WTYIFGACCATTVFIPSFHNY) threads the bilayer. Over 193–195 (RIW) the chain is Cytoplasmic. The helical transmembrane segment at 196 to 216 (SFLGLGMTTYTAWYMTIAAIV) threads the bilayer. At 217 to 231 (HGQVENVVHSGPKKM) the chain is on the extracellular side. The chain crosses the membrane as a helical span at residues 232–252 (VWYFTGATNILYTFGGHAVTV). At 253 to 265 (EIMHAMWKPQKFK) the chain is on the cytoplasmic side. A helical transmembrane segment spans residues 266–286 (AIYFFATLYVFTLTLPSAIAV). Over 287–313 (YWAFGDQLLDHSNAFSLLPRNAWRDAG) the chain is Extracellular. A helical transmembrane segment spans residues 314–334 (VILMLIHQFITFGFACTPLYF). Topologically, residues 335–355 (VWEKVIGMHDTKSIFLRALAR) are cytoplasmic. A helical membrane pass occupies residues 356 to 376 (LPVVIPIWFLAIIFPFFGPIN). A topological domain (extracellular) is located at residue Ser-377. A helical transmembrane segment spans residues 378–398 (AVGALLVSFTVYVIPASAHML). The Cytoplasmic segment spans residues 399 to 421 (TYRSASARQNAAEKLPKVIPSWT). A helical transmembrane segment spans residues 422–442 (LMYVINAFVVIWVTIVGFGFG). Residues 443–479 (GWASMTNFIKQVDTFGLFAKCYQCPPKLPASNHTMHH) lie on the Extracellular side of the membrane. Asn-474 carries an N-linked (GlcNAc...) asparagine glycan.

This sequence belongs to the amino acid/polyamine transporter 2 family. Amino acid/auxin permease (AAAP) (TC 2.A.18.1) subfamily. In terms of tissue distribution, shoots and roots of nodulating plants. Higher levels in roots, flowers and stems, lower in nodules, leaves, petioles and shoot apices.

The protein resides in the cell membrane. In terms of biological role, carrier protein involved in proton-driven auxin influx. Mediates the formation of auxin gradient from developing leaves (site of auxin biosynthesis) to tips by contributing to the loading of auxin in vascular tissues and facilitating acropetal (base to tip) auxin transport within inner tissues of the root apex, and basipetal (tip to base) auxin transport within outer tissues of the root apex. May be involved in lateral roots and nodules formation. The protein is Auxin transporter-like protein 1 (LAX1) of Medicago truncatula (Barrel medic).